The primary structure comprises 244 residues: tRNA pseudouridine synthase B (244 aa).

Residue Asp46 is the Nucleophile of the active site.

Belongs to the pseudouridine synthase TruB family. Type 1 subfamily.

The catalysed reaction is uridine(55) in tRNA = pseudouridine(55) in tRNA. Functionally, responsible for synthesis of pseudouridine from uracil-55 in the psi GC loop of transfer RNAs. In Bordetella parapertussis (strain 12822 / ATCC BAA-587 / NCTC 13253), this protein is tRNA pseudouridine synthase B.